The chain runs to 175 residues: Inorganic pyrophosphatase 1 (175 aa).

Residues Lys30, Arg44, and Tyr56 each coordinate substrate. Mg(2+)-binding residues include Asp66, Asp71, and Asp103. Tyr142 is a substrate binding site.

The protein belongs to the PPase family. In terms of assembly, homohexamer. The cofactor is Mg(2+).

The protein localises to the cytoplasm. It carries out the reaction diphosphate + H2O = 2 phosphate + H(+). In terms of biological role, catalyzes the hydrolysis of inorganic pyrophosphate (PPi) forming two phosphate ions. The chain is Inorganic pyrophosphatase 1 from Pseudomonas syringae pv. tomato (strain ATCC BAA-871 / DC3000).